Here is a 207-residue protein sequence, read N- to C-terminus: Transcription factor bHLH149 (207 aa).

Residues 1–25 (MVESLFPSIENTGESSRRKKPRISE) are disordered. The bHLH domain maps to 132–181 (KSRKGLTETNRIKLPAVERKLKILGRLVPGCRKVSVPNLLDEATDYIAAL).

Homodimer. Interacts with PRE3.

The protein localises to the nucleus. In terms of biological role, atypical bHLH transcription factor probably unable to bind DNA. Negatively regulates brassinosteroid signaling. This chain is Transcription factor bHLH149 (BHLH149), found in Arabidopsis thaliana (Mouse-ear cress).